The sequence spans 292 residues: 11-beta-hydroxysteroid dehydrogenase 1 (292 aa).

Residues 2–7 (HFMKKY) are Cytoplasmic-facing. Residues 8 to 24 (LLPILVLFLAYYYYSTK) form a helical; Signal-anchor for type II membrane protein membrane-spanning segment. Over 25-292 (EEFRPEMLQG…SFTFDKLISS (268 aa)) the chain is Lumenal. Residues 41 to 67 (GASK…TARS), 92 to 93 (TM), and 119 to 121 (NHI) contribute to the NADP(+) site. An N-linked (GlcNAc...) asparagine glycan is attached at asparagine 162. Substrate is bound at residue serine 170. Tyrosine 183 serves as the catalytic Proton acceptor. 183–187 (YSASK) is a binding site for NADP(+). A glycan (N-linked (GlcNAc...) asparagine) is linked at asparagine 207. 218–222 (INTET) contacts NADP(+).

It belongs to the short-chain dehydrogenases/reductases (SDR) family. Homodimer. As to expression, detected in adrenal gland, liver, kidney, testis, and at lower levels in brain and lung (at protein level).

The protein resides in the endoplasmic reticulum membrane. It catalyses the reaction an 11beta-hydroxysteroid + NADP(+) = an 11-oxosteroid + NADPH + H(+). The catalysed reaction is corticosterone + NADP(+) = 11-dehydrocorticosterone + NADPH + H(+). It carries out the reaction a 7beta-hydroxysteroid + NADP(+) = a 7-oxosteroid + NADPH + H(+). The enzyme catalyses 7-oxocholesterol + NADPH + H(+) = 7beta-hydroxycholesterol + NADP(+). It catalyses the reaction 7-oxocholesterol + NADPH + H(+) = 7alpha-hydroxycholesterol + NADP(+). The catalysed reaction is chenodeoxycholate + NADP(+) = 7-oxolithocholate + NADPH + H(+). It carries out the reaction 7-oxolithocholate + NADPH + H(+) = ursodeoxycholate + NADP(+). The enzyme catalyses glycochenodeoxycholate + NADP(+) = 7-oxoglycolithocholate + NADPH + H(+). It catalyses the reaction taurochenodeoxycholate + NADP(+) = 7-oxotaurolithocholate + NADPH + H(+). The catalysed reaction is tauroursodeoxycholate + NADP(+) = 7-oxotaurolithocholate + NADPH + H(+). It carries out the reaction glycoursodeoxycholate + NADP(+) = 7-oxoglycolithocholate + NADPH + H(+). The enzyme catalyses 7-oxopregnenolone + NADPH + H(+) = 7beta-hydroxypregnenolone + NADP(+). It catalyses the reaction 3beta,7alpha-dihydroxyandrost-5-en-17-one + NADP(+) = 3beta-hydroxy-5-androstene-7,17-dione + NADPH + H(+). The catalysed reaction is 3beta-hydroxy-5-androstene-7,17-dione + NADPH + H(+) = 3beta,7beta-dihydroxyandrost-5-en-17-one + NADP(+). It carries out the reaction 3beta-hydroxy-5alpha-androstane-7,17-dione + NADPH + H(+) = 3beta,7beta-dihydroxy-5alpha-androstan-17-one + NADP(+). The protein operates within steroid metabolism. Functionally, controls the reversible conversion of biologically active glucocorticoids such as 11-dehydrocorticosterone to corticosterone in the presence of NADP(H). Participates in the corticosteroid receptor-mediated anti-inflammatory response, as well as metabolic and homeostatic processes. Bidirectional in vitro, predominantly functions as a reductase in vivo, thereby increasing the concentration of active glucocorticoids. It has broad substrate specificity, besides glucocorticoids, it accepts other steroid and sterol substrates. Interconverts 7-oxo- and 7-hydroxy-neurosteroids such as 7-oxopregnenolone and 7beta-hydroxypregnenolone, 7-oxodehydroepiandrosterone (3beta-hydroxy-5-androstene-7,17-dione) and 7beta-hydroxydehydroepiandrosterone (3beta,7beta-dihydroxyandrost-5-en-17-one), among others. Catalyzes reversibly the conversion of the major dietary oxysterol, 7-ketocholesterol (7-oxocholesterol), into the more polar 7-beta-hydroxycholesterol and 7-alpha-hhydroxycholesterol metabolites. 7-oxocholesterol is one of the most important oxysterols, it participates in several events such as induction of apoptosis, accumulation in atherosclerotic lesions, lipid peroxidation, and induction of foam cell formation. Mediates the 7-oxo reduction of 7-oxolithocholate mainly to chenodeoxycholate, and to a lesser extent to ursodeoxycholate, both in its free form and when conjugated to glycine or taurine, providing a link between glucocorticoid activation and bile acid metabolism. Catalyzes the synthesis of 7-beta-25-dihydroxycholesterol from 7-oxo-25-hydroxycholesterol in vitro, which acts as a ligand for the G-protein-coupled receptor (GPCR) Epstein-Barr virus-induced gene 2 (EBI2) and may thereby regulate immune cell migration. The sequence is that of 11-beta-hydroxysteroid dehydrogenase 1 (HSD11B1) from Mesocricetus auratus (Golden hamster).